A 241-amino-acid chain; its full sequence is Chaperone protein FimC (241 aa).

An N-terminal signal peptide occupies residues 1–36 (MSNKNVNVRKSQEITFCLLAGILMFMAMMVAGRAEA).

It belongs to the periplasmic pilus chaperone family.

Its subcellular location is the periplasm. In terms of biological role, required for the biogenesis of type 1 fimbriae. Binds and interact with FimH. In Escherichia coli (strain K12), this protein is Chaperone protein FimC (fimC).